A 1054-amino-acid chain; its full sequence is Proteoglycan 4 (1054 aa).

A signal peptide spans 1-24; it reads MGWKILPVCLSLLLPVVLIQQVSS. SMB domains follow at residues 26–69 and 66–108; these read DLSS…PELS and PELS…EEVH. Intrachain disulfides connect Cys-30-Cys-34, Cys-30-Cys-46, Cys-34-Cys-64, Cys-44-Cys-46, Cys-44-Cys-57, Cys-50-Cys-56, Cys-57-Cys-64, Cys-70-Cys-74, Cys-70-Cys-86, Cys-74-Cys-104, Cys-84-Cys-86, Cys-84-Cys-97, Cys-90-Cys-96, and Cys-97-Cys-104. The N-linked (GlcNAc...) asparagine glycan is linked to Asn-109. Residues 110 to 125 are compositionally biased toward low complexity; the sequence is STSPSSKTAPTPAGAS. Residues 110–764 form a disordered region; the sequence is STSPSSKTAP…PLIPGPPVLF (655 aa). The O-linked (GalNAc...) serine glycan is linked to Ser-135. Residues 162 to 175 are compositionally biased toward low complexity; sequence QESSSSSSSSSSTI. A compositionally biased stretch (basic and acidic residues) spans 188–200; the sequence is ELQKNPNVKDNKK. Pro residues predominate over residues 229–238; it reads TPPPPDPPTT. Residues Thr-237 and Thr-250 are each glycosylated (O-linked (GalNAc...) threonine). The segment covering 286 to 295 has biased composition (low complexity); that stretch reads TTATNKQSSA. O-linked (GalNAc...) threonine glycosylation is present at Thr-301. Ser-302 carries O-linked (GalNAc...) serine glycosylation. A compositionally biased stretch (basic and acidic residues) spans 302–318; it reads SVKETRSAEKTSDKDVE. A glycan (O-linked (GalNAc...) threonine) is linked at Thr-306. Ser-313 carries O-linked (GalNAc...) serine glycosylation. A 1; approximate repeat occupies 317–324; it reads VEPTSTTP. The 37 X 8 AA repeats of K-X-P-X-P-T-T-X stretch occupies residues 317–618; that stretch reads VEPTSTTPKN…TPKKPEPTTT (302 aa). Residues 319 to 328 are compositionally biased toward polar residues; that stretch reads PTSTTPKNSA. The 2; approximate repeat unit spans residues 325 to 332; it reads KNSAPTTT. Ser-327 is a glycosylation site (O-linked (GalNAc...) serine). Residues 329–339 are compositionally biased toward low complexity; the sequence is PTTTKKPVTTT. O-linked (GalNAc...) threonine glycosylation is found at Thr-330, Thr-338, Thr-354, Thr-362, Thr-369, Thr-377, Thr-378, Thr-385, Thr-386, Thr-393, and Thr-394. Residues 333 to 340 form a 3; approximate repeat; it reads KKPVTTTK. The stretch at 349–356 is one 4; approximate repeat; sequence QEPEPTTA. Residues 357–364 form repeat 5; that stretch reads KEPPPTTK. Residues 364–399 are compositionally biased toward basic and acidic residues; the sequence is KKPEPTTRKEPEPTTPKEPEPTTPKEPEPTTPKEPE. One copy of the 6; approximate repeat lies at 365–371; sequence KPEPTTR. Tandem repeats lie at residues 372 to 379, 380 to 387, 388 to 395, 396 to 403, and 404 to 411. Over residues 400–426 the composition is skewed to pro residues; that stretch reads PTTPKEPPPTTKKPEPTTPKEPGPTTP. A 12; approximate repeat occupies 412-418; sequence KPEPTTP. Residues Thr-416, Thr-417, Thr-424, Thr-432, Thr-433, Thr-440, Thr-441, and Thr-448 are each glycosylated (O-linked (GalNAc...) threonine). A run of 3 repeats spans residues 419–426, 427–434, and 435–442. Over residues 427-550 the composition is skewed to basic and acidic residues; that stretch reads KEPEPTTTKE…PEPTTPKKPE (124 aa). The stretch at 443-450 is one 16; approximate repeat; it reads KEPESTTR. A run of 21 repeats spans residues 451-458, 459-466, 467-474, 475-482, 483-490, 491-498, 499-506, 507-514, 515-522, 523-530, 531-538, 539-546, 547-554, 555-562, 563-570, 571-578, 579-586, 587-594, 595-602, 603-610, and 611-618. O-linked (GalNAc...) threonine glycans are attached at residues Thr-472, Thr-480, Thr-481, Thr-488, Thr-489, Thr-496, Thr-497, Thr-504, Thr-505, Thr-512, Thr-520, Thr-521, Thr-528, and Thr-529. Over residues 551 to 562 the composition is skewed to pro residues; sequence PTTPKEPVPTTP. 7 O-linked (GalNAc...) threonine glycosylation sites follow: Thr-553, Thr-560, Thr-561, Thr-568, Thr-569, Thr-576, and Thr-577. A compositionally biased stretch (basic and acidic residues) spans 563–614; sequence KEPEPTTPKEPEPTTPKEPEPTTRKEPEPTTPKEPEPTTPKEPEPTTPKKPE. Thr-592, Thr-600, and Thr-601 each carry an O-linked (GalNAc...) threonine glycan. A compositionally biased stretch (low complexity) spans 615 to 624; sequence PTTTSPKTTT. O-linked (GalNAc...) threonine glycosylation is found at Thr-622, Thr-624, Thr-628, Thr-629, and Thr-692. The segment covering 672–699 has biased composition (basic residues); the sequence is KPTKKPTKAPKKPTSTKKPKTPKTRKPK. Over residues 700 to 712 the composition is skewed to low complexity; the sequence is TTPSPLKTTSATP. Positions 713-735 are enriched in polar residues; the sequence is ELNTTPLEVMLPTTTIPKQTPNP. Cys-795 and Cys-1053 form a disulfide bridge. 2 Hemopexin repeats span residues 797-840 and 841-888; these read GKPV…VWGI and PSPI…FGGL. N-linked (GlcNAc...) asparagine glycosylation occurs at Asn-808. Thr-810 carries an O-linked (GalNAc...) threonine glycan. The N-linked (GlcNAc...) asparagine glycan is linked to Asn-938.

In terms of assembly, homodimer; disulfide-linked. In terms of processing, N-glycosylated. Post-translationally, O-glycosylated; contains glycosaminoglycan chondroitin sulfate and keratan sulfate. O-glycosylated with sialylated oligosaccharides which are predominantly represented by the monosialylated core type I structure, NeuNAcalpha2-3Galbeta1-3GalNAc, with smaller amounts of disialylated O-glycans. The disulfide bond between Cys-795 and Cys-1053 is essential for protein cleavage. In terms of processing, proteolytically cleaved by cathepsin CTSG. In terms of tissue distribution, highly expressed in cartilage, bone and liver and weakly expressed in heart, brain and muscle. Expressed in the surface chondrocytes and in synovial intimal cells. Isoform B is expressed in bone, small intestine, muscle, testis, heart, liver and lung. Isoform C and isoform D are widely expressed.

The protein resides in the secreted. Functionally, plays a role in boundary lubrication within articulating joints. Prevents protein deposition onto cartilage from synovial fluid by controlling adhesion-dependent synovial growth and inhibiting the adhesion of synovial cells to the cartilage surface. The protein is Proteoglycan 4 (Prg4) of Mus musculus (Mouse).